Here is a 141-residue protein sequence, read N- to C-terminus: HTH-type transcriptional repressor NsrR (141 aa).

The 128-residue stretch at 2-129 (QLTSFTDYGL…DSHTLADMVE (128 aa)) folds into the HTH rrf2-type domain. Residues 28–51 (ISEVTEVYGVSRNHMVKIINQLSR) constitute a DNA-binding region (H-T-H motif). [2Fe-2S] cluster is bound by residues cysteine 91, cysteine 96, and cysteine 102.

The cofactor is [2Fe-2S] cluster.

Its function is as follows. Nitric oxide-sensitive repressor of genes involved in protecting the cell against nitrosative stress. May require iron for activity. The chain is HTH-type transcriptional repressor NsrR from Serratia proteamaculans (strain 568).